Reading from the N-terminus, the 120-residue chain is U-scoloptoxin(16)-Er2a (120 aa).

Positions 1 to 26 (MNTVSVVQFLAVGCAVFVLYGRGVFA) are cleaved as a signal peptide.

It belongs to the scoloptoxin-16 family. Post-translationally, contains 4 disulfide bonds. Expressed by the venom gland.

It localises to the secreted. This Ethmostigmus rubripes (Giant centipede) protein is U-scoloptoxin(16)-Er2a.